The chain runs to 100 residues: Probable DNA-binding protein HU (100 aa).

This sequence belongs to the bacterial histone-like protein family.

Functionally, histone-like DNA-binding protein which is capable of wrapping DNA to stabilize it, and thus to prevent its denaturation under extreme environmental conditions. This is Probable DNA-binding protein HU (hup) from Chlamydia muridarum (strain MoPn / Nigg).